The following is a 248-amino-acid chain: Triosephosphate isomerase (248 aa).

9-11 lines the substrate pocket; it reads NWK. H94 functions as the Electrophile in the catalytic mechanism. Catalysis depends on E166, which acts as the Proton acceptor. Residues G172, S212, and 233-234 contribute to the substrate site; that span reads GG.

It belongs to the triosephosphate isomerase family. Homodimer.

It localises to the cytoplasm. It catalyses the reaction D-glyceraldehyde 3-phosphate = dihydroxyacetone phosphate. It participates in carbohydrate biosynthesis; gluconeogenesis. Its pathway is carbohydrate degradation; glycolysis; D-glyceraldehyde 3-phosphate from glycerone phosphate: step 1/1. Functionally, involved in the gluconeogenesis. Catalyzes stereospecifically the conversion of dihydroxyacetone phosphate (DHAP) to D-glyceraldehyde-3-phosphate (G3P). This is Triosephosphate isomerase from Clostridium botulinum (strain Okra / Type B1).